Consider the following 1483-residue polypeptide: Chromosome partition protein MukB (1483 aa).

G34 to S41 is an ATP binding site. Coiled-coil stretches lie at residues L326–Q418, L444–Q480, R509–A601, R780–L804, E837–E923, E977–A1115, and V1209–V1265. The flexible hinge stretch occupies residues P666–C783.

Belongs to the SMC family. MukB subfamily. As to quaternary structure, homodimerization via its hinge domain. Binds to DNA via its C-terminal region. Interacts, and probably forms a ternary complex, with MukE and MukF via its C-terminal region. The complex formation is stimulated by calcium or magnesium. Interacts with tubulin-related protein FtsZ.

The protein resides in the cytoplasm. It localises to the nucleoid. Plays a central role in chromosome condensation, segregation and cell cycle progression. Functions as a homodimer, which is essential for chromosome partition. Involved in negative DNA supercoiling in vivo, and by this means organize and compact chromosomes. May achieve or facilitate chromosome segregation by condensation DNA from both sides of a centrally located replisome during cell division. This chain is Chromosome partition protein MukB, found in Shigella dysenteriae serotype 1 (strain Sd197).